A 523-amino-acid polypeptide reads, in one-letter code: MRLARGIKYAVIGAGVALFGVLFGWVMFPAILKSQLKKEMALSKKTDVRKMWEKIPFALDFKIYLFNYTNPEEVQKGAAPIVKEVGPYYFEEWKEKVEIEDHEEDDTITYRKMDTFYFRPELSGPGLTGEETIIMPHVFMMSMAITVYRDKPSMMNMLGKAINGIFDNPSDVFMRVNAMDILFRGVIINCDRTEFAPKAACTAIKKEGAKSLIIEPNNQLRFSLFGLKNHTVDSRVVTVKRGIKNVMDVGQVVAMDGAPQLEIWNDHCNEYQGTDGTIFPPFLTQKDRLQSYSADLCRSFKPWFQKTTYYRGIKTNHYIANMGDFANDPELNCFCETPEKCPPKGLMDLTKCVKAPMYASMPHFLDADPQMLENVKGLNPDMNEHGIQIDFEPISGTPMMAKQRVQFNMELLRVEKIEIMKELPGYIVPLLWIEGGLALNKTFVKMLKNQLFIPKRIVSVIRWWLLSFGMLAALGGVIFHFKDDIMRIAIKGDSSVTKVNPEDGEQKDVSVIGQSHEPPKINM.

The Cytoplasmic segment spans residues 1-10; it reads MRLARGIKYA. A helical membrane pass occupies residues 11–31; the sequence is VIGAGVALFGVLFGWVMFPAI. Residues 32-458 are Extracellular-facing; the sequence is LKSQLKKEMA…NQLFIPKRIV (427 aa). Asn-67 and Asn-229 each carry an N-linked (GlcNAc...) asparagine glycan. Intrachain disulfides connect Cys-268–Cys-333, Cys-297–Cys-352, and Cys-335–Cys-341. A glycan (N-linked (GlcNAc...) asparagine) is linked at Asn-440. The chain crosses the membrane as a helical span at residues 459–479; sequence SVIRWWLLSFGMLAALGGVIF. Residues 480 to 523 lie on the Cytoplasmic side of the membrane; it reads HFKDDIMRIAIKGDSSVTKVNPEDGEQKDVSVIGQSHEPPKINM. Positions 499–523 are disordered; that stretch reads VNPEDGEQKDVSVIGQSHEPPKINM.

This sequence belongs to the CD36 family. As to expression, localizes to both male and female antennae but not the leg, wing, gut, head, or thoracic ganglia. Detected throughout the sensory epithelium, associating with both sex-pheromone sensilla and plant-volatile sensilla. Differentially expressed both among different sensilla and different neurons within a given sensillum. Expression coincides with that of several other olfactory-specific proteins that are involved in odor detection.

It localises to the cell membrane. Plays an olfactory role that is not restricted to pheromone sensitivity. This chain is Sensory neuron membrane protein 1, found in Manduca sexta (Tobacco hawkmoth).